The chain runs to 362 residues: Porin Omp2b (362 aa).

The first 22 residues, 1-22, serve as a signal peptide directing secretion; sequence MNIKSLLLGSAAALVAASGAQA.

Belongs to the alphaproteobacteria porin family. In terms of assembly, homotrimer.

It is found in the cell outer membrane. In terms of biological role, forms passive diffusion pores that allow small molecular weight hydrophilic materials across the outer membrane. The protein is Porin Omp2b (omp2b) of Brucella canis (strain ATCC 23365 / NCTC 10854 / RM-666).